A 454-amino-acid chain; its full sequence is MNIVILAAGMGKRMNSALPKVLHPVAGQPMLSHVLDTARTLSPSRLVVVVGHGAELVRKAVGADDVAFAEQAQQLGTGHAVMQALPLLDDSQPTLVLYGDVPLTSVDTLKGLVQAAGAERLGVLTVEMPDPTGYGRIVRDAAGNIVRIVEQKDASEDVRAIREINTGIIVCPTAHLRQWLATLRNDNSQGEYYLTDTIERAVNDGVEVVSAQPAALWETLGVNSKVQLAEIERIHQRNIAQRLLEAGVTLLDPARIDVRGELTCGRDVTIDVGCVFEGRVHLEDGVSVGAHCVVRNTTIGAGARIQPFCHFEDAKVGPDGRIGPYARLRPGTELGQDVHIGNFVEIKNSQIADHSKANHLAYVGDATVGQRVNIGAGTITCNYDGVNKHRTVLEDDVFIGSDTQLVAPVTVRRGATIGAGTTLTKEAPADKLTLSRAKQMTLDAWQRPVKQPKK.

Residues 1–225 form a pyrophosphorylase region; the sequence is MNIVILAAGM…LWETLGVNSK (225 aa). UDP-N-acetyl-alpha-D-glucosamine contacts are provided by residues 6 to 9, K20, Q71, 76 to 77, 98 to 100, G135, E150, N165, and N223; these read LAAG, GT, and YGD. A Mg(2+)-binding site is contributed by D100. N223 contacts Mg(2+). Residues 226–246 form a linker region; that stretch reads VQLAEIERIHQRNIAQRLLEA. Positions 247–454 are N-acetyltransferase; that stretch reads GVTLLDPARI…WQRPVKQPKK (208 aa). UDP-N-acetyl-alpha-D-glucosamine is bound by residues R329 and K347. The Proton acceptor role is filled by H359. The UDP-N-acetyl-alpha-D-glucosamine site is built by Y362 and N373. Acetyl-CoA is bound by residues A376, 382-383, S401, A419, and R436; that span reads NY.

It in the N-terminal section; belongs to the N-acetylglucosamine-1-phosphate uridyltransferase family. The protein in the C-terminal section; belongs to the transferase hexapeptide repeat family. In terms of assembly, homotrimer. It depends on Mg(2+) as a cofactor.

The protein resides in the cytoplasm. It catalyses the reaction alpha-D-glucosamine 1-phosphate + acetyl-CoA = N-acetyl-alpha-D-glucosamine 1-phosphate + CoA + H(+). The catalysed reaction is N-acetyl-alpha-D-glucosamine 1-phosphate + UTP + H(+) = UDP-N-acetyl-alpha-D-glucosamine + diphosphate. It participates in nucleotide-sugar biosynthesis; UDP-N-acetyl-alpha-D-glucosamine biosynthesis; N-acetyl-alpha-D-glucosamine 1-phosphate from alpha-D-glucosamine 6-phosphate (route II): step 2/2. The protein operates within nucleotide-sugar biosynthesis; UDP-N-acetyl-alpha-D-glucosamine biosynthesis; UDP-N-acetyl-alpha-D-glucosamine from N-acetyl-alpha-D-glucosamine 1-phosphate: step 1/1. Its pathway is bacterial outer membrane biogenesis; LPS lipid A biosynthesis. In terms of biological role, catalyzes the last two sequential reactions in the de novo biosynthetic pathway for UDP-N-acetylglucosamine (UDP-GlcNAc). The C-terminal domain catalyzes the transfer of acetyl group from acetyl coenzyme A to glucosamine-1-phosphate (GlcN-1-P) to produce N-acetylglucosamine-1-phosphate (GlcNAc-1-P), which is converted into UDP-GlcNAc by the transfer of uridine 5-monophosphate (from uridine 5-triphosphate), a reaction catalyzed by the N-terminal domain. The chain is Bifunctional protein GlmU from Cupriavidus metallidurans (strain ATCC 43123 / DSM 2839 / NBRC 102507 / CH34) (Ralstonia metallidurans).